A 360-amino-acid chain; its full sequence is MPKKILFTGGGTVGHVTLNLILIPKFIKDGWEVHYIGDKNGIEHTEIEKSGLDVTFHAIATGKLRRYFSWQNLADVFKVALGLLQSLFIVAKLRPQALFSKGGFVSVPPVVAAKLLGKPVFIHESDRSMGLANKIAYKFATTMYTTFEQEDQLSKVKHLGAVTKVFKDANQMPESTQLEAVKEYFSRDLKTLLFIGGSAGAHVFNQFISDHPELKQRYNIINITGDPHLNELSSHLYRVDYVTDLYQPLMAMADLVVTRGGSNTLFELLAMAKLHLIVPLGKEASRGDQLENATYFEKRGYAKQLQEPDLTLHNFDQAMADLFEHQADYEATMLATKEIQSPDFFYDLLRADISSAIKEK.

UDP-N-acetyl-alpha-D-glucosamine-binding residues include Ser198 and Gln289.

It belongs to the glycosyltransferase 28 family. MurG subfamily.

Its subcellular location is the cell membrane. The catalysed reaction is Mur2Ac(oyl-L-Ala-gamma-D-Glu-L-Lys-D-Ala-D-Ala)-di-trans,octa-cis-undecaprenyl diphosphate + UDP-N-acetyl-alpha-D-glucosamine = beta-D-GlcNAc-(1-&gt;4)-Mur2Ac(oyl-L-Ala-gamma-D-Glu-L-Lys-D-Ala-D-Ala)-di-trans,octa-cis-undecaprenyl diphosphate + UDP + H(+). It participates in cell wall biogenesis; peptidoglycan biosynthesis. Cell wall formation. Catalyzes the transfer of a GlcNAc subunit on undecaprenyl-pyrophosphoryl-MurNAc-pentapeptide (lipid intermediate I) to form undecaprenyl-pyrophosphoryl-MurNAc-(pentapeptide)GlcNAc (lipid intermediate II). In Streptococcus pyogenes serotype M18 (strain MGAS8232), this protein is UDP-N-acetylglucosamine--N-acetylmuramyl-(pentapeptide) pyrophosphoryl-undecaprenol N-acetylglucosamine transferase.